A 214-amino-acid polypeptide reads, in one-letter code: Protein DMP6 (214 aa).

A run of 4 helical transmembrane segments spans residues 52–72 (LANL…PICT), 83–103 (FMTA…SFTD), 143–163 (FIDF…VLFD), and 178–198 (VVEL…MVFA).

The protein belongs to the plant DMP1 protein family. In terms of tissue distribution, expressed constitutively in leaves, stems, flowers, siliques and roots (e.g. root hairs).

It is found in the vacuole membrane. In terms of biological role, involved in membrane remodeling. The polypeptide is Protein DMP6 (Arabidopsis thaliana (Mouse-ear cress)).